The chain runs to 571 residues: RNA polymerase sigma factor SigA (571 aa).

Positions 321–391 (MVESNLRLVI…TRAIADQART (71 aa)) are sigma-70 factor domain-2. An Interaction with polymerase core subunit RpoC motif is present at residues 345–348 (DLIQ). The segment at 400–476 (ETINKVLRGA…DTAVESPAEA (77 aa)) is sigma-70 factor domain-3. Residues 489-542 (VLKTLTDRERFVLIHRFGLLDGRPKTLEEVGSAFNVTRERIRQIEAKALRKMRH) form a sigma-70 factor domain-4 region. A DNA-binding region (H-T-H motif) is located at residues 515–534 (LEEVGSAFNVTRERIRQIEA).

This sequence belongs to the sigma-70 factor family. RpoD/SigA subfamily. As to quaternary structure, interacts transiently with the RNA polymerase catalytic core.

It localises to the cytoplasm. Its function is as follows. Sigma factors are initiation factors that promote the attachment of RNA polymerase to specific initiation sites and are then released. This sigma factor is the primary sigma factor during exponential growth. In Chlamydia muridarum (strain MoPn / Nigg), this protein is RNA polymerase sigma factor SigA.